A 281-amino-acid polypeptide reads, in one-letter code: Probable catechol O-methyltransferase 2 (281 aa).

Residues I78, E100, S108, E127, V128, A156, and D183 each contribute to the S-adenosyl-L-methionine site. D183 contacts Mg(2+). K186 serves as a coordination point for substrate. Residues D211 and N212 each coordinate Mg(2+). N212 contacts substrate.

Belongs to the class I-like SAM-binding methyltransferase superfamily. Cation-dependent O-methyltransferase family. The cofactor is Mg(2+).

The protein localises to the vacuole. It carries out the reaction a catechol + S-adenosyl-L-methionine = a guaiacol + S-adenosyl-L-homocysteine + H(+). The sequence is that of Probable catechol O-methyltransferase 2 from Schizosaccharomyces pombe (strain 972 / ATCC 24843) (Fission yeast).